Consider the following 495-residue polypeptide: Amorpha-4,11-diene 12-monooxygenase (495 aa).

Topologically, residues Met1–Lys6 are cytoplasmic. Residues Ala7–Ala29 traverse the membrane as a helical; Signal-anchor for type II membrane protein segment. The Lumenal portion of the chain corresponds to Thr30 to Phe495. Asn176, Asn261, Asn267, Asn386, and Asn417 each carry an N-linked (GlcNAc...) asparagine glycan. Cys439 serves as a coordination point for heme.

The protein belongs to the cytochrome P450 family. It depends on heme as a cofactor. As to expression, highly expressed both in apical and sub-apical cells of glandular secretory trichomes. Detected in flower buds, leaves and roots. Also present in non-glandular trichome cells.

It is found in the endoplasmic reticulum membrane. The enzyme catalyses (+)-amorpha-4,11-diene + 3 reduced [NADPH--hemoprotein reductase] + 3 O2 = (+)-artemisinate + 3 oxidized [NADPH--hemoprotein reductase] + 4 H2O + 4 H(+). Its pathway is sesquiterpene biosynthesis. Involved in the biosynthesis of the antimalarial endoperoxide artemisinin. Catalyzes three consecutive oxidations of amorpha-4,11-diene to produce artemisinic acid, with artemisinic alcohol and artemisinic aldehyde as intermediates products, but is unable to oxidize germacrene A. No activity with limonene, alpha-pinene, beta-pinene, pinocarveol, (-)-alloisolongifolene, caryophyllene, (-)-alpha-gurjunene, (+)-gamma-gurjunene, (+)-ledene, (+)-beta-selinene and (+)-valencene as substrates. In Artemisia annua (Sweet wormwood), this protein is Amorpha-4,11-diene 12-monooxygenase.